A 1504-amino-acid polypeptide reads, in one-letter code: DNA-directed RNA polymerase subunit beta' (1504 aa).

Positions 60, 62, 75, and 78 each coordinate Zn(2+). Residues 265–294 form a disordered region; sequence RKQRDLEDAEQLTGAERERKEYEASQERER. Residues 279-294 show a composition bias toward basic and acidic residues; the sequence is AERERKEYEASQERER. Mg(2+) contacts are provided by D626, D628, and D630. C1002, C1075, C1082, and C1085 together coordinate Zn(2+). Positions 1468-1504 are disordered; sequence RALIGGDGDDGERNNGDFDDQVGEDVVIPPDDDDQEA.

Belongs to the RNA polymerase beta' chain family. As to quaternary structure, the RNAP catalytic core consists of 2 alpha, 1 beta, 1 beta' and 1 omega subunit. When a sigma factor is associated with the core the holoenzyme is formed, which can initiate transcription. It depends on Mg(2+) as a cofactor. Zn(2+) is required as a cofactor.

It carries out the reaction RNA(n) + a ribonucleoside 5'-triphosphate = RNA(n+1) + diphosphate. In terms of biological role, DNA-dependent RNA polymerase catalyzes the transcription of DNA into RNA using the four ribonucleoside triphosphates as substrates. The chain is DNA-directed RNA polymerase subunit beta' from Roseiflexus sp. (strain RS-1).